Consider the following 552-residue polypeptide: TBCC domain-containing protein 1 (552 aa).

Residues 304-435 (PRLHRIVVMS…LEDHMARTGL (132 aa)) enclose the C-CAP/cofactor C-like domain.

This sequence belongs to the TBCC family. Expressed in brain and testis (at protein level).

It localises to the cytoplasm. Its subcellular location is the cytoskeleton. It is found in the microtubule organizing center. The protein localises to the centrosome. The protein resides in the spindle pole. Its function is as follows. Plays a role in the regulation of centrosome and Golgi apparatus positioning, with consequences on cell shape and cell migration. This chain is TBCC domain-containing protein 1 (Tbccd1), found in Mus musculus (Mouse).